The chain runs to 75 residues: Large ribosomal subunit protein bL31 (75 aa).

This sequence belongs to the bacterial ribosomal protein bL31 family. Type A subfamily. In terms of assembly, part of the 50S ribosomal subunit.

Functionally, binds the 23S rRNA. The protein is Large ribosomal subunit protein bL31 of Bradyrhizobium sp. (strain BTAi1 / ATCC BAA-1182).